The primary structure comprises 235 residues: NAD(P)H-hydrate epimerase (235 aa).

The YjeF N-terminal domain maps to 18 to 221 (AAQIDEQLFT…SLVDEHELLM (204 aa)). 65–69 (NNGGD) is a binding site for (6S)-NADPHX. Asparagine 66 and aspartate 127 together coordinate K(+). (6S)-NADPHX-binding positions include 131–137 (GFSFHPP) and aspartate 160. Serine 163 is a binding site for K(+).

It belongs to the NnrE/AIBP family. It depends on K(+) as a cofactor.

The enzyme catalyses (6R)-NADHX = (6S)-NADHX. It carries out the reaction (6R)-NADPHX = (6S)-NADPHX. Functionally, catalyzes the epimerization of the S- and R-forms of NAD(P)HX, a damaged form of NAD(P)H that is a result of enzymatic or heat-dependent hydration. This is a prerequisite for the S-specific NAD(P)H-hydrate dehydratase to allow the repair of both epimers of NAD(P)HX. The protein is NAD(P)H-hydrate epimerase of Caenorhabditis elegans.